Consider the following 633-residue polypeptide: Protein CASP (633 aa).

The Cytoplasmic portion of the chain corresponds to 1–601 (MAVASEALLQ…LLFSRATRGL (601 aa)). Positions 39-60 (QKTSLDERKELSSKTKEFRKQP) are disordered. 2 coiled-coil regions span residues 111-339 (IEAA…LANK) and 369-433 (SLES…VDVE). The chain crosses the membrane as a helical; Anchor for type IV membrane protein span at residues 602 to 622 (FFMYLILLHLFIMIVLLKLGI). Residues 623–633 (AGNTAYTPMNY) lie on the Lumenal side of the membrane.

This sequence belongs to the CASP family.

The protein localises to the golgi apparatus membrane. Functionally, may be involved in intra-Golgi transport. The chain is Protein CASP (coy1) from Schizosaccharomyces pombe (strain 972 / ATCC 24843) (Fission yeast).